We begin with the raw amino-acid sequence, 723 residues long: Tryptophan 2-monooxygenase (723 aa).

FMN-binding residues include Ser218, Glu238, Arg246, and Arg266. Position 266 (Arg266) interacts with substrate.

Belongs to the tryptophan 2-monooxygenase family. It depends on FMN as a cofactor.

The enzyme catalyses L-tryptophan + O2 = indole-3-acetamide + CO2 + H2O. It participates in plant hormone metabolism; auxin biosynthesis. This chain is Tryptophan 2-monooxygenase (iaaM), found in Allorhizobium ampelinum (strain ATCC BAA-846 / DSM 112012 / S4) (Agrobacterium vitis (strain S4)).